A 159-amino-acid chain; its full sequence is 2-C-methyl-D-erythritol 2,4-cyclodiphosphate synthase (159 aa).

2 residues coordinate a divalent metal cation: Asp-8 and His-10. 4-CDP-2-C-methyl-D-erythritol 2-phosphate contacts are provided by residues 8–10 (DVH) and 34–35 (HS). Position 42 (His-42) interacts with a divalent metal cation. 4-CDP-2-C-methyl-D-erythritol 2-phosphate contacts are provided by residues 56 to 58 (DIG), 61 to 65 (FPDTD), 100 to 106 (AQAPRML), 132 to 135 (TTTE), Phe-139, and Arg-142.

It belongs to the IspF family. Homotrimer. A divalent metal cation is required as a cofactor.

The enzyme catalyses 4-CDP-2-C-methyl-D-erythritol 2-phosphate = 2-C-methyl-D-erythritol 2,4-cyclic diphosphate + CMP. Its pathway is isoprenoid biosynthesis; isopentenyl diphosphate biosynthesis via DXP pathway; isopentenyl diphosphate from 1-deoxy-D-xylulose 5-phosphate: step 4/6. Functionally, involved in the biosynthesis of isopentenyl diphosphate (IPP) and dimethylallyl diphosphate (DMAPP), two major building blocks of isoprenoid compounds. Catalyzes the conversion of 4-diphosphocytidyl-2-C-methyl-D-erythritol 2-phosphate (CDP-ME2P) to 2-C-methyl-D-erythritol 2,4-cyclodiphosphate (ME-CPP) with a corresponding release of cytidine 5-monophosphate (CMP). This chain is 2-C-methyl-D-erythritol 2,4-cyclodiphosphate synthase, found in Escherichia coli O6:K15:H31 (strain 536 / UPEC).